Consider the following 394-residue polypeptide: Aspergillopepsin-1 (394 aa).

The first 20 residues, 1–20 (MVVFSKTAALVLGLSSAVSA), serve as a signal peptide directing secretion. Positions 21–69 (APAPTRKGFTINQIARPANKTRTINLPGMYARSLAKFGGTVPQSVKEAA) are cleaved as a propeptide — activation peptide. The 307-residue stretch at 85–391 (YLTPVTVGKS…NSEGPKLGFA (307 aa)) folds into the Peptidase A1 domain. Catalysis depends on residues Asp-101 and Asp-283. Cys-319 and Cys-354 are disulfide-bonded.

It belongs to the peptidase A1 family. Monomer.

It is found in the secreted. The enzyme catalyses Hydrolysis of proteins with broad specificity. Generally favors hydrophobic residues in P1 and P1', but also accepts Lys in P1, which leads to activation of trypsinogen. Does not clot milk.. Secreted aspartic endopeptidase that allows assimilation of proteinaceous substrates. The scissile peptide bond is attacked by a nucleophilic water molecule activated by two aspartic residues in the active site. Shows a broad primary substrate specificity. Favors hydrophobic residues at the P1 and P1' positions, but also accepts a lysine residue in the P1 position, leading to the activation of trypsinogen and chymotrypsinogen A. In Aspergillus niger (strain ATCC MYA-4892 / CBS 513.88 / FGSC A1513), this protein is Aspergillopepsin-1 (pepA).